Consider the following 252-residue polypeptide: MPEVTRVSESDRLFAQPQQRVADFVFNEDVVRVFPDMIKRSVPGYPTIVENIGVLGAQFARPHSVLYDLGCSLGAVTQSLRRHVRSDGCRVIGVDNSHAMIERCGEYLHAQDAMYQELLPVELIEADILALELQPTSLVAMNFTLQFVAPDQRLGLLRNIRRALLPGGALILSEKLRFADAQEHALLTDLHIAFKRANGYSELEIAQKRSALENVMLPDTFEEHRERLLAAGFSRVSQWFQCLNFASMIALP.

Residues Tyr-45, 70–72, 95–96, 127–128, Asn-142, and Arg-209 each bind S-adenosyl-L-methionine; these read GCS, DN, and DI.

Belongs to the class I-like SAM-binding methyltransferase superfamily. Cx-SAM synthase family. As to quaternary structure, homodimer.

It catalyses the reaction prephenate + S-adenosyl-L-methionine = carboxy-S-adenosyl-L-methionine + 3-phenylpyruvate + H2O. Functionally, catalyzes the conversion of S-adenosyl-L-methionine (SAM) to carboxy-S-adenosyl-L-methionine (Cx-SAM). The polypeptide is Carboxy-S-adenosyl-L-methionine synthase (Pseudomonas paraeruginosa (strain DSM 24068 / PA7) (Pseudomonas aeruginosa (strain PA7))).